The sequence spans 461 residues: Fumarate hydratase class II (461 aa).

Substrate-binding positions include 97–99 (SGT), Arg125, 128–131 (HPND), 138–140 (SSN), and Thr186. The Proton donor/acceptor role is filled by His187. The active site involves Ser317. Substrate-binding positions include Ser318 and 323–325 (KVN).

It belongs to the class-II fumarase/aspartase family. Fumarase subfamily. Homotetramer.

It localises to the cytoplasm. It catalyses the reaction (S)-malate = fumarate + H2O. Its pathway is carbohydrate metabolism; tricarboxylic acid cycle; (S)-malate from fumarate: step 1/1. Its function is as follows. Involved in the TCA cycle. Catalyzes the stereospecific interconversion of fumarate to L-malate. This chain is Fumarate hydratase class II, found in Ralstonia nicotianae (strain ATCC BAA-1114 / GMI1000) (Ralstonia solanacearum).